The primary structure comprises 215 residues: Cytochrome b6 (215 aa).

Residues 32 to 52 traverse the membrane as a helical segment; the sequence is IFYCLGGITLTCFLVQVATGF. Cysteine 35 is a heme c binding site. Heme b-binding residues include histidine 86 and histidine 100. Transmembrane regions (helical) follow at residues 90–110, 116–136, and 186–206; these read ASMMVLMMILHVFRVYLTGGF, LTWVTGVVLAVLTASFGVTGY, and LHTFVLPLLTAVFMLMHFLMI. Positions 187 and 202 each coordinate heme b.

It belongs to the cytochrome b family. PetB subfamily. The 4 large subunits of the cytochrome b6-f complex are cytochrome b6, subunit IV (17 kDa polypeptide, PetD), cytochrome f and the Rieske protein, while the 4 small subunits are PetG, PetL, PetM and PetN. The complex functions as a dimer. Heme b serves as cofactor. Heme c is required as a cofactor.

Its subcellular location is the plastid. It is found in the chloroplast thylakoid membrane. Its function is as follows. Component of the cytochrome b6-f complex, which mediates electron transfer between photosystem II (PSII) and photosystem I (PSI), cyclic electron flow around PSI, and state transitions. The polypeptide is Cytochrome b6 (Eucalyptus globulus subsp. globulus (Tasmanian blue gum)).